A 113-amino-acid chain; its full sequence is Teretoxin Tan14.1 (113 aa).

An N-terminal signal peptide occupies residues methionine 1 to valine 21. Positions histidine 22 to arginine 86 are excised as a propeptide.

It belongs to the teretoxin N (TN) superfamily. In terms of processing, contains 2 disulfide bonds. Expressed by the venom duct.

Its subcellular location is the secreted. This Terebra anilis (Auger snail) protein is Teretoxin Tan14.1.